Reading from the N-terminus, the 506-residue chain is Lysine--tRNA ligase (506 aa).

2 residues coordinate Mg(2+): glutamate 416 and glutamate 423.

Belongs to the class-II aminoacyl-tRNA synthetase family. Homodimer. Mg(2+) serves as cofactor.

The protein resides in the cytoplasm. It carries out the reaction tRNA(Lys) + L-lysine + ATP = L-lysyl-tRNA(Lys) + AMP + diphosphate. This is Lysine--tRNA ligase from Bordetella parapertussis (strain 12822 / ATCC BAA-587 / NCTC 13253).